Reading from the N-terminus, the 976-residue chain is Terminal uridylyltransferase 1 (976 aa).

Disordered stretches follow at residues 1 to 47 (MVSK…DADF) and 129 to 185 (TGRS…TTEG). Residues 1-188 (MVSKYHRLLQ…EDDTTEGPRG (188 aa)) form a required for oligomerization and may contribute to the incorporation into the MPsome complex region. The segment covering 147–183 (ADDESDGNLDTDGSDASEGDEVESTTDADVYGEDDTT) has biased composition (acidic residues). Residues 190–221 (VRLYSCDACPHAVFTTHAALLAHAEEHHADLL) form a C2H2-type; atypical zinc finger. Positions 195, 198, 212, and 217 each coordinate Zn(2+). UTP contacts are provided by residues S298 and 309–312 (ADID). Mg(2+) is bound by residues D310 and D312. R358 provides a ligand contact to RNA. In terms of domain architecture, PAP-associated spans 366 to 425 (ASSPILTVARRDAEDVVARSIRFILNGPATREDRLLLEGSVRDAVGPTGVQQVWWNRTSD). UTP contacts are provided by residues 480–484 (GIRNS), K505, K509, and 523–524 (SY). The short motif at 652-661 (IEDPYEENLN) is the Nucleotide recognition motif (NRM) element. Residues 700–976 (DSSGTPAAGG…SKVTPFKSPR (277 aa)) form an important for catalytic activity and RNA binding region. The tract at residues 732–755 (SESRRLPQSNSDNSGRIANGDNES) is disordered.

The protein belongs to the DNA polymerase type-B-like family. As to quaternary structure, oligomer. Component of the mitochondrial 3' processome (MPsome) complex composed at least of terminal uridylyltransferase KRET1/TUT1, 3'-5' exonuclease DSS1, MPSS1, MPSS2 and MPSS3. Within the complex, interacts with DSS1, MPSS1 and MPSS3. It depends on Mg(2+) as a cofactor. Mn(2+) is required as a cofactor.

It localises to the mitochondrion. It catalyses the reaction RNA(n) + UTP = RNA(n)-3'-uridine ribonucleotide + diphosphate. Functionally, terminal uridylyltransferase which is involved in the post-transcriptional editing of mitochondrial RNA, a process involving the addition and deletion of uridine (U) nucleotides in the pre-RNA. Specifically, catalyzes the addition of Us to the 3'-hydroxyl group of guided RNA (gRNA), ribosomal RNA (rRNA) and some mRNAs. As part of the mitochondrial 3' processome (MPsome), catalyzes the primary 3' uridylation of gRNA precursors to facilitate their recognition and to induce their processive 3'-5' degradation by DSS1, and the secondary 3' uridylation of mature gRNAs. Involved in the 3' uridylylation of the long A/U tail of some edited and never-edited mRNAs. Promotes 3' uridylylation-mediated decay of some never-edited mRNAs. Does not mediate RNA-independent UTP polymerization. This chain is Terminal uridylyltransferase 1, found in Trypanosoma brucei brucei.